The primary structure comprises 322 residues: Pantothenate kinase (322 aa).

100-107 lines the ATP pocket; that stretch reads GSVAVGKS.

It belongs to the prokaryotic pantothenate kinase family.

It localises to the cytoplasm. It carries out the reaction (R)-pantothenate + ATP = (R)-4'-phosphopantothenate + ADP + H(+). It participates in cofactor biosynthesis; coenzyme A biosynthesis; CoA from (R)-pantothenate: step 1/5. The protein is Pantothenate kinase of Brucella canis (strain ATCC 23365 / NCTC 10854 / RM-666).